Consider the following 434-residue polypeptide: Enolase (434 aa).

Position 41 (A41) interacts with phosphoenolpyruvate. Q165 contributes to the (2R)-2-phosphoglycerate binding site. Residue E207 is the Proton donor of the active site. Mg(2+) contacts are provided by D244, E291, and D318. Residues K343, R372, S373, and K394 each coordinate phosphoenolpyruvate. (2R)-2-phosphoglycerate is bound by residues K343, R372, S373, and K394. K343 acts as the Proton acceptor in catalysis.

This sequence belongs to the enolase family. Homodimer and homooctamer; the homodimer is inactive. The cofactor is Mg(2+).

It localises to the cytoplasm. It is found in the secreted. The protein localises to the cell surface. The enzyme catalyses (2R)-2-phosphoglycerate = phosphoenolpyruvate + H2O. It participates in carbohydrate degradation; glycolysis; pyruvate from D-glyceraldehyde 3-phosphate: step 4/5. Its function is as follows. Catalyzes the reversible conversion of 2-phosphoglycerate (2-PG) into phosphoenolpyruvate (PEP). It is essential for the degradation of carbohydrates via glycolysis. Functionally, 'Moonlights' as a laminin receptor. Binds laminin when expressed on the bacterial cell surface; this probably induces destruction of the extracellular matrix, favoring invasion and dissemination. The sequence is that of Enolase from Staphylococcus aureus.